The chain runs to 509 residues: Dihydrolipoyl dehydrogenase, mitochondrial (509 aa).

A mitochondrion-targeting transit peptide spans 1 to 35 (MQSWSRVYCSLVKRGHFSRISHGLQGVSVVPLRTY). Lys66 is modified (N6-acetyllysine; alternate). N6-succinyllysine; alternate is present on Lys66. FAD contacts are provided by residues 71 to 80 (EKNETLGGTC) and Lys89. Residues Cys80 and Cys85 are joined by a disulfide bond. Residues Lys104, Lys122, Lys132, and Lys143 each carry the N6-acetyllysine; alternate modification. 4 positions are modified to N6-succinyllysine; alternate: Lys104, Lys122, Lys132, and Lys143. Gly154 provides a ligand contact to FAD. Lys159 and Lys166 each carry N6-succinyllysine. FAD is bound at residue 183-185 (TGS). Residues 220–227 (GAGVIGVE) and Glu243 contribute to the NAD(+) site. N6-succinyllysine is present on residues Lys273 and Lys277. Val278 contributes to the NAD(+) binding site. Residues Ser285 and Ser297 each carry the phosphoserine modification. An NAD(+)-binding site is contributed by Gly314. Position 346 is an N6-acetyllysine (Lys346). FAD is bound by residues Asp355 and 361 to 364 (MLAH). At Lys410 the chain carries N6-acetyllysine; alternate. Position 410 is an N6-succinyllysine; alternate (Lys410). N6-acetyllysine occurs at positions 417 and 420. Position 430 is an N6-succinyllysine (Lys430). The active-site Proton acceptor is His487. Lys505 is subject to N6-acetyllysine; alternate. Lys505 is subject to N6-succinyllysine; alternate.

Belongs to the class-I pyridine nucleotide-disulfide oxidoreductase family. As to quaternary structure, homodimer. Part of the multimeric pyruvate dehydrogenase complex that contains multiple copies of pyruvate dehydrogenase (subunits PDHA (PDHA1 or PDHA2) and PDHB, E1), dihydrolipoamide acetyltransferase (DLAT, E2) and lipoamide dehydrogenase (DLD, E3). These subunits are bound to an inner core composed of about 48 DLAT and 12 PDHX molecules (by non covalent bonds). The 2-oxoglutarate dehydrogenase complex is composed of OGDH (2-oxoglutarate dehydrogenase; E1), DLST (dihydrolipoamide succinyltransferase; E2), DLD (dihydrolipoamide dehydrogenase; E3) and the assembly factor KGD4. It contains multiple copies of the three enzymatic components (E1, E2 and E3). In the nucleus, the 2-oxoglutarate dehydrogenase complex associates with KAT2A. Interacts with PDHX. FAD serves as cofactor. In terms of processing, tyrosine phosphorylated.

The protein resides in the mitochondrion matrix. It localises to the nucleus. It is found in the cell projection. Its subcellular location is the cilium. The protein localises to the flagellum. The protein resides in the cytoplasmic vesicle. It localises to the secretory vesicle. It is found in the acrosome. It carries out the reaction N(6)-[(R)-dihydrolipoyl]-L-lysyl-[protein] + NAD(+) = N(6)-[(R)-lipoyl]-L-lysyl-[protein] + NADH + H(+). Lipoamide dehydrogenase is a component of the glycine cleavage system as well as an E3 component of three alpha-ketoacid dehydrogenase complexes (pyruvate-, alpha-ketoglutarate-, and branched-chain amino acid-dehydrogenase complex). The 2-oxoglutarate dehydrogenase complex is mainly active in the mitochondrion. A fraction of the 2-oxoglutarate dehydrogenase complex also localizes in the nucleus and is required for lysine succinylation of histones: associates with KAT2A on chromatin and provides succinyl-CoA to histone succinyltransferase KAT2A. In monomeric form may have additional moonlighting function as serine protease. Involved in the hyperactivation of spermatazoa during capacitation and in the spermatazoal acrosome reaction. The protein is Dihydrolipoyl dehydrogenase, mitochondrial (DLD) of Bos taurus (Bovine).